The sequence spans 302 residues: Forkhead box protein R2 (302 aa).

Positions 183 to 285 (RPPLNYSHLV…RVLAYARRES (103 aa)) form a DNA-binding region, fork-head.

Its subcellular location is the nucleus. This is Forkhead box protein R2 (Foxr2) from Mus musculus (Mouse).